The sequence spans 414 residues: uncharacterized protein (414 aa).

A disordered region spans residues 204 to 230; sequence LVGTPAPGPNGSNSDGDSERASQDVRD. The segment covering 220–230 has biased composition (basic and acidic residues); the sequence is DSERASQDVRD.

The protein belongs to the CdaR family.

This is an uncharacterized protein from Mycobacterium tuberculosis (strain CDC 1551 / Oshkosh).